The following is a 530-amino-acid chain: TNF receptor-associated factor 6 (530 aa).

The interval M1–I362 is interaction with TAX1BP1. Residues C70–N109 form an RING-type; degenerate zinc finger. A Glycyl lysine isopeptide (Lys-Gly) (interchain with G-Cter in SUMO); alternate cross-link involves residue K124. Residue K124 forms a Glycyl lysine isopeptide (Lys-Gly) (interchain with G-Cter in ubiquitin); alternate linkage. Residue K142 forms a Glycyl lysine isopeptide (Lys-Gly) (interchain with G-Cter in SUMO) linkage. 2 consecutive TRAF-type zinc fingers follow at residues D150–E202 and I203–A259. Positions N302–Q356 form a coiled coil. A Glycyl lysine isopeptide (Lys-Gly) (interchain with G-Cter in ubiquitin) cross-link involves residue K327. The region spanning N358–V507 is the MATH domain. The segment at W363 to V530 is interaction with TANK. K461 is covalently cross-linked (Glycyl lysine isopeptide (Lys-Gly) (interchain with G-Cter in SUMO)).

This sequence belongs to the TNF receptor-associated factor family. A subfamily. As to quaternary structure, homotrimer. Homooligomer. N-terminal region is dimeric while C-terminal region is trimeric; maybe providing a mode of oligomerization. Upon IL1B treatment, forms a complex with PELI1, IRAK1, IRAK4 and MYD88; this complex recruits MAP3K7/TAK1, TAB1 and TAB2 to mediate NF-kappa-B activation. Direct binding of SMAD6 to PELI1 prevents the complex formation and hence negatively regulates IL1R-TLR signaling and eventually NF-kappa-B-mediated gene expression. Binds to TNFRSF5/CD40 and TNFRSF11A/RANK. Associates with NGFR, TNFRSF17, IRAK2, IRAK3, RIPK2, MAP3K1, MAP3K5, MAP3K14, CSK, TRAF, TRAF-interacting protein TRIP and TNF receptor associated protein TDP2. Interacts with IL17R. Interacts with SQSTM1 bridging NTRK1 and NGFR. Forms a ternary complex with SQSTM1 and PRKCZ. Interacts with PELI2 and PELI3. Binds UBE2V1. Interacts with TAX1BP1; this interaction mediates deubiquitination of TRAF6 and inhibition of NF-kappa-B activation. Interacts with ZNF675. Interacts with ARRB1 and ARRB2. Interacts with MAP3K7 and TAB1/MAP3K7IP1; during IL-1 signaling. Interacts with UBE2N. Interacts with TGFBR1, HDAC1 and RANGAP1. Interacts with AKT1, AKT2 and AKT3. Interacts (via TRAF domains) with NUMBL (via C-terminal). Interacts with RBCK1. Interacts with LIMD1 (via LIM domains). Interacts with RSAD2/viperin. Interacts (via C-terminus) with EIF2AK2/PKR (via the kinase catalytic domain). Interacts with ZFAND5. Interacts with IL1RL1. Interacts with TRAFD1. Interacts with AJUBA. Interacts with MAVS/IPS1. Interacts (via TRAF domains) with DYNC2I2 (via WD domains). Interacts with IFIT3 (via N-terminus). Interacts with TICAM2. Interacts with CARD14. Interacts with CD40 and MAP3K8; the interaction is required for ERK activation. Interacts with TICAM1 and this interaction is enhanced in the presence of WDFY1. Interacts with TANK; this interaction increases in response to DNA damage. Interacts with USP10; this interaction increases in response to DNA damage. Interacts with ZC3H12A; this interaction increases in response to DNA damage and is stimulated by TANK. Interacts with WDFY3. Interacts with TRIM13. Interacts with GPS2. Interacts (via C-terminus) with SASH1. Interacts with LRRC19. Interacts with IL17RA and TRAF3IP2. Interacts with TOMM70. Interacts with AMBRA1; interaction is required to mediate 'Lys-63'-linked ubiquitination of ULK1. Interacts with CRBN; this interaction inhibits TLR4-mediated signaling by preventing TRAF6-mediated ubiquitination of ECSIT. Sumoylated on Lys-124, Lys-142 and Lys-461 with SUMO1. In terms of processing, polyubiquitinated on Lys-124 by TRAF3IP2; after cell stimulation with IL17A. Polyubiquitinated; after cell stimulation with IL1B or TGFB. This ligand-induced cell stimulation leads to dimerization/oligomerization of TRAF6 molecules, followed by auto-ubiquitination which involves UBE2N and UBE2V1 and leads to TRAF6 activation. This 'Lys-63' site-specific poly-ubiquitination appears to be associated with the activation of signaling molecules. Endogenous autoubiquitination occurs only for the cytoplasmic form. Deubiquitinated by USP10 in a TANK-dependent manner, leading to the negative regulation of NF-kappa-B signaling upon DNA damage. LRRC19 induces 'Lys-63' ubiquitination. Ubiquitinated at Lys-327 by the SCF(FBXL2) complex, leading to its degradation by the proteasome.

It localises to the cytoplasm. The protein resides in the cell cortex. Its subcellular location is the nucleus. It is found in the lipid droplet. The catalysed reaction is S-ubiquitinyl-[E2 ubiquitin-conjugating enzyme]-L-cysteine + [acceptor protein]-L-lysine = [E2 ubiquitin-conjugating enzyme]-L-cysteine + N(6)-ubiquitinyl-[acceptor protein]-L-lysine.. The protein operates within protein modification; protein ubiquitination. Its function is as follows. E3 ubiquitin ligase that, together with UBE2N and UBE2V1, mediates the synthesis of 'Lys-63'-linked-polyubiquitin chains conjugated to proteins, such as ECSIT, IKBKG, IRAK1, AKT1 and AKT2. Also mediates ubiquitination of free/unanchored polyubiquitin chain that leads to MAP3K7 activation. Leads to the activation of NF-kappa-B and JUN. Seems to also play a role in dendritic cells (DCs) maturation and/or activation. Represses c-Myb-mediated transactivation, in B-lymphocytes. Adapter protein that seems to play a role in signal transduction initiated via TNF receptor, IL-1 receptor and IL-17 receptor. Regulates osteoclast differentiation by mediating the activation of adapter protein complex 1 (AP-1) and NF-kappa-B, in response to RANK-L stimulation. Together with MAP3K8, mediates CD40 signals that activate ERK in B-cells and macrophages, and thus may play a role in the regulation of immunoglobulin production. Acts as a regulator of the JNK and NF-kappa-B signaling pathways by initiating assembly of heterotypic 'Lys-63'-/'Lys-48'-linked branched ubiquitin chains that are then recognized by TAB2: TRAF6 catalyzes initial 'Lys-63'-linked-polyubiquitin chains that are then branched via 'Lys-48'-linked polyubiquitin by HUWE1. 'Lys-63'-/'Lys-48'-linked branched ubiquitin chains protect 'Lys-63'-linkages from CYLD deubiquitination. Also participates in the TCR signaling by ubiquitinating LAT. This chain is TNF receptor-associated factor 6 (Traf6), found in Rattus norvegicus (Rat).